The chain runs to 2617 residues: DNA-directed RNA polymerase subunit beta'' (2617 aa).

Positions 263, 334, 341, and 344 each coordinate Zn(2+).

It belongs to the RNA polymerase beta' chain family. RpoC2 subfamily. As to quaternary structure, in plastids the minimal PEP RNA polymerase catalytic core is composed of four subunits: alpha, beta, beta', and beta''. When a (nuclear-encoded) sigma factor is associated with the core the holoenzyme is formed, which can initiate transcription. Zn(2+) serves as cofactor.

It is found in the plastid. The protein resides in the chloroplast. It catalyses the reaction RNA(n) + a ribonucleoside 5'-triphosphate = RNA(n+1) + diphosphate. DNA-dependent RNA polymerase catalyzes the transcription of DNA into RNA using the four ribonucleoside triphosphates as substrates. This Oedogonium cardiacum (Filamentous green alga) protein is DNA-directed RNA polymerase subunit beta''.